The following is a 506-amino-acid chain: MFSLQDLCRKNLFLPLEPLGKHVVQRLGLYWEGHGSVKRVGDCFVCVDQIWVLPTHKAVQIAASEGNEDIVKLFLLWKGSLQYAIIGALEGRQYDLIQKYYNQIGDCHQILPLIQDPEIYERCHELNVTCTFQCLFQHAIRDNMLPIFQKYGEDLNGNRGMVQLLYEMACRLQNYDIIKWIGFNLHVYNLEAIFSIAFVRKDLTLYSLGYMLLLGRMSTVDRNFISIITRHLEYASKKGLFDFVLESLKYGGQVDTVLFQAVKYNHRKILAHFIHEIPRETVEKLILHAVESRASRKTFNLLLSSINYCVNPFVKKLLHAVVKHKYMLIIKLLLERPKKKINLVDAALFKLVKYSTYKEIVKYMDEFSVDPKRVVKMAARLMRVDLIKKISNDAWEDKLERIKHLKQMVNTMNHRNGKNLLMYNIHNITGYTHLNTKEAFNLTKFYAVHNATCLFKEMCKSCFEHDKIQFRELLEDCLHIANRHAYIQIAETADECIKYIDLITPK.

ANK repeat units follow at residues 54-83, 253-283, and 313-343; these read PTHKAVQIAASEGNEDIVKLFLLWKGSLQY, QVDTVLFQAVKYNHRKILAHFIHEIPRETVE, and FVKKLLHAVVKHKYMLIIKLLLERPKKKINL.

This sequence belongs to the asfivirus MGF 505 family.

Functionally, plays a role in virus cell tropism, and may be required for efficient virus replication in macrophages. The chain is Protein MGF 505-9R from Ornithodoros (relapsing fever ticks).